Consider the following 880-residue polypeptide: uncharacterized protein (880 aa).

Disordered stretches follow at residues 101–149 (KPIP…LRSE), 191–224 (PETS…ISTH), 240–273 (TTTT…PILK), 294–350 (NSNS…STTS), 425–446 (QPDS…ESQP), 470–508 (STST…SSSS), 536–561 (MESS…NDNS), 580–613 (APQS…NDDE), 682–713 (NTNT…NINN), and 844–880 (NSSG…KSEI). The stretch at 113–147 (ISIKEKEKEKEKEKEKEKEKEKEKEKEMKSTINLR) forms a coiled coil. The segment covering 115-149 (IKEKEKEKEKEKEKEKEKEKEKEKEMKSTINLRSE) has biased composition (basic and acidic residues). Low complexity-rich tracts occupy residues 193–223 (TSTP…SIST) and 240–256 (TTTT…PSSS). Polar residues predominate over residues 257–271 (IAGITNPTSRSSSPI). Positions 294–332 (NSNSSSGGGNNNNKSISTPSSPIISRPITNKINNNNNNN) are enriched in low complexity. Polar residues predominate over residues 333 to 342 (QPQLHYNQPQ). The span at 536–548 (MESSTTTTLLSEN) shows a compositional bias: low complexity. The segment covering 589–613 (QPEDDPFFDFEDLSDDDDSNDNDDE) has biased composition (acidic residues). Positions 844–864 (NSSGSGNNSNDNSGSSSPSSS) are enriched in low complexity. Residues 865–880 (KTNTLNQQSICIKSEI) are compositionally biased toward polar residues.

This is an uncharacterized protein from Dictyostelium discoideum (Social amoeba).